Reading from the N-terminus, the 300-residue chain is Probable alpha-L-glutamate ligase (300 aa).

The region spanning Leu-104–Glu-287 is the ATP-grasp domain. ATP is bound by residues Lys-141, Glu-178–Tyr-179, Asp-187, and Arg-211–Asn-213. Positions 248, 260, and 262 each coordinate Mg(2+). Residues Asp-248, Glu-260, and Asn-262 each contribute to the Mn(2+) site.

The protein belongs to the RimK family. The cofactor is Mg(2+). Mn(2+) serves as cofactor.

The chain is Probable alpha-L-glutamate ligase from Klebsiella pneumoniae (strain 342).